The chain runs to 339 residues: Uracil nucleotide/cysteinyl leukotriene receptor (339 aa).

Residues 1-36 (MNGLEAALPSLTDNSSLAYSEQCGQETPLENMLFAC) lie on the Extracellular side of the membrane. Asparagine 14 is a glycosylation site (N-linked (GlcNAc...) asparagine). The helical transmembrane segment at 37–57 (FYLLDFILAFVGNALALWLFI) threads the bilayer. Over 58-64 (WDHKSGT) the chain is Cytoplasmic. The chain crosses the membrane as a helical span at residues 65 to 85 (PANVFLMHLAVADLSCVLVLP). Over 86-105 (TRLVYHFSGNHWPFGEIPCR) the chain is Extracellular. A disulfide bridge links cysteine 104 with cysteine 181. The chain crosses the membrane as a helical span at residues 106–126 (LTGFLFYLNMYASIYFLTCIS). Residues 127-147 (ADRFLAIVHPVKSLKLRRPLY) lie on the Cytoplasmic side of the membrane. A helical membrane pass occupies residues 148–168 (AHLACAFLWIVVAVAMAPLLV). Topologically, residues 169-195 (SPQTVQTNHTVVCLQLYREKASHHALA) are extracellular. Residue asparagine 176 is glycosylated (N-linked (GlcNAc...) asparagine). Residues 196-216 (SLAVAFTFPFITTVTCYLLII) form a helical membrane-spanning segment. Residues 217–232 (RSLRQGPRIEKHLKNK) are Cytoplasmic-facing. The helical transmembrane segment at 233–253 (AVRMIAMVLAIFLICFVPYHI) threads the bilayer. At 254–280 (HRSVYVLHYRGGGTSCAAQRALALGNR) the chain is on the extracellular side. A helical membrane pass occupies residues 281 to 301 (ITSCLTSLNGALDPVMYFFVA). The Cytoplasmic portion of the chain corresponds to 302 to 339 (EKFRHALCNLLCSKRLTGPPPSFEGKTNESSLSARSEL).

Belongs to the G-protein coupled receptor 1 family.

It localises to the cell membrane. In terms of biological role, dual specificity receptor for uracil nucleotides and cysteinyl leukotrienes (CysLTs). Signals through G(i) and inhibition of adenylyl cyclase. May mediate brain damage by nucleotides and CysLTs following ischemia. The protein is Uracil nucleotide/cysteinyl leukotriene receptor of Mus musculus (Mouse).